We begin with the raw amino-acid sequence, 316 residues long: MIQRRTVGIVGTGNVGTAAAYAMFNQSLASEILLLDQDTRRAEGEAMDLMHGQQLVGGITCRAVEYAALSNAQIIVLSAGASQQSPDETRLGLLQRNAEIFREIIIQLDKHAPNAILVVATNPVDVLTYICQELSSRPNRRILGTGTLLDTARFRALLGRHYGVDPRSVHAYILGEHGDSEVPIWSNATIGGQKIRGETVLGKEWEEEAMQSIFEQARDAAYEIIDRKGHTDTAIGLVIARIVRAVLEDQQNVLPVSTRPDGAYGIDDVCLSVPCVVGLEGMEKRVDPGLSDEEREALRDSARALRDSRADLTVGT.

NAD(+) is bound by residues V15, D36, R41, Y66, and 80-81; that span reads GA. Substrate contacts are provided by residues Q83, R90, and 122–125; that span reads NPVD. Residues 120–122 and T145 each bind NAD(+); that span reads ATN. 150–153 serves as a coordination point for substrate; sequence DTAR. Beta-D-fructose 1,6-bisphosphate contacts are provided by R155 and H170. H177 (proton acceptor) is an active-site residue. The residue at position 222 (Y222) is a Phosphotyrosine. Residue T231 coordinates substrate. A disordered region spans residues 287-316; that stretch reads DPGLSDEEREALRDSARALRDSRADLTVGT. Residues 296-310 show a composition bias toward basic and acidic residues; it reads EALRDSARALRDSRA.

Belongs to the LDH/MDH superfamily. LDH family. In terms of assembly, homotetramer.

Its subcellular location is the cytoplasm. It catalyses the reaction (S)-lactate + NAD(+) = pyruvate + NADH + H(+). It functions in the pathway fermentation; pyruvate fermentation to lactate; (S)-lactate from pyruvate: step 1/1. Allosterically activated by fructose 1,6-bisphosphate (FBP). Its function is as follows. Catalyzes the conversion of lactate to pyruvate. The protein is L-lactate dehydrogenase of Salinibacter ruber (strain DSM 13855 / M31).